Here is a 144-residue protein sequence, read N- to C-terminus: Large ribosomal subunit protein uL16 (144 aa).

Belongs to the universal ribosomal protein uL16 family. As to quaternary structure, part of the 50S ribosomal subunit.

Its function is as follows. Binds 23S rRNA and is also seen to make contacts with the A and possibly P site tRNAs. The protein is Large ribosomal subunit protein uL16 of Lactiplantibacillus plantarum (strain ATCC BAA-793 / NCIMB 8826 / WCFS1) (Lactobacillus plantarum).